The chain runs to 246 residues: Azurocidin (246 aa).

The signal sequence occupies residues 1 to 19; that stretch reads MPALRFLALLASLLATSRV. A propeptide spanning residues 20-26 is cleaved from the precursor; sequence GLATLAD. One can recognise a Peptidase S1 domain in the interval 27–242; sequence IVGGRRAQPQ…FRNWIDSVLN (216 aa). Cysteines 52 and 68 form a disulfide. N-linked (GlcNAc...) asparagine glycosylation is found at Asn-139 and Asn-170. 2 disulfide bridges follow: Cys-148-Cys-205 and Cys-178-Cys-184. Residues 245–246 constitute a propeptide that is removed on maturation; it reads PA.

The protein belongs to the peptidase S1 family. Elastase subfamily.

It localises to the cytoplasmic granule membrane. Functionally, this is a neutrophil granule-derived antibacterial and monocyte- and fibroblast-specific chemotactic glycoprotein. Binds heparin. This chain is Azurocidin, found in Sus scrofa (Pig).